The primary structure comprises 482 residues: MAAVFDLDLETEEGSEGEGEPELSPADACPLAELRAAGLEPVGHYEEVELTETSVNVGPERIGPHCFELLRVLGKGGYGKVFQVRKVQGTNLGKIYAMKVLRKAKIVRNAKDTAHTRAERNILESVKHPFIVELAYAFQTGGKLYLILECLSGGELFTHLEREGIFLEDTACFYLAEITLALGHLHSQGIIYRDLKPENIMLSSQGHIKLTDFGLCKESIHEGAVTHTFCGTIEYMAPEILVRSGHNRAVDWWSLGALMYDMLTGSPPFTAENRKKTMDKIIRGKLALPPYLTPDARDLVKKFLKRNPSQRIGGGPGDAADVQRHPFFRHMNWDDLLAWRVDPPFRPCLQSEEDVSQFDTRFTRQTPVDSPDDTALSESANQAFLGFTYVAPSVLDSIKEGFSFQPKLRSPRRLNSSPRAPVSPLKFSPFEGFRPSPSLPEPTELPLPPLLPPPPPSTTAPLPIRPPSGTKKSKRGRGRPGR.

The interval 1 to 26 is disordered; it reads MAAVFDLDLETEEGSEGEGEPELSPA. Over residues 7–21 the composition is skewed to acidic residues; sequence LDLETEEGSEGEGEP. A Phosphoserine modification is found at Ser-15. The Protein kinase domain occupies 67–328; sequence FELLRVLGKG…AADVQRHPFF (262 aa). Residues 73–81 and Lys-99 each bind ATP; that span reads LGKGGYGKV. Asp-194 (proton acceptor) is an active-site residue. The AGC-kinase C-terminal domain occupies 329–399; sequence RHMNWDDLLA…VAPSVLDSIK (71 aa). The disordered stretch occupies residues 407 to 482; sequence KLRSPRRLNS…SKRGRGRPGR (76 aa). A phosphoserine mark is found at Ser-417 and Ser-423. The segment covering 437-466 has biased composition (pro residues); the sequence is PSLPEPTELPLPPLLPPPPPSTTAPLPIRP. Residues 471 to 477 carry the Nuclear localization signal motif; that stretch reads KKSKRGR. A compositionally biased stretch (basic residues) spans 471-482; it reads KKSKRGRGRPGR. Ser-473 carries the post-translational modification Phosphoserine; by PKC.

It belongs to the protein kinase superfamily. AGC Ser/Thr protein kinase family. S6 kinase subfamily. Post-translationally, phosphorylated and activated by MTOR. Phosphorylation by PKC within the NLS in response to mitogenic stimuli causes cytoplasmic retention.

The protein resides in the cytoplasm. It is found in the nucleus. It catalyses the reaction L-seryl-[protein] + ATP = O-phospho-L-seryl-[protein] + ADP + H(+). The enzyme catalyses L-threonyl-[protein] + ATP = O-phospho-L-threonyl-[protein] + ADP + H(+). Functionally, phosphorylates specifically ribosomal protein S6. Seems to act downstream of mTOR signaling in response to growth factors and nutrients to promote cell proliferation, cell growth and cell cycle progression in an alternative pathway regulated by MEAK7. This chain is Ribosomal protein S6 kinase beta-2 (RPS6KB2), found in Homo sapiens (Human).